The sequence spans 1171 residues: ATP-dependent helicase/deoxyribonuclease subunit B (1171 aa).

The UvrD-like helicase ATP-binding domain occupies 1 to 343; the sequence is MSLRFVIGRA…LVADENYRYR (343 aa). 8 to 15 lines the ATP pocket; sequence GRAGSGKS. The UvrD-like helicase C-terminal domain occupies 281-587; the sequence is MEQPRFHSPA…QFANIPPSLD (307 aa). Residues Cys805, Cys1129, Cys1132, and Cys1138 each coordinate [4Fe-4S] cluster.

The protein belongs to the helicase family. AddB/RexB type 1 subfamily. As to quaternary structure, heterodimer of AddA and AddB. Mg(2+) is required as a cofactor. [4Fe-4S] cluster serves as cofactor.

Its function is as follows. The heterodimer acts as both an ATP-dependent DNA helicase and an ATP-dependent, dual-direction single-stranded exonuclease. Recognizes the chi site generating a DNA molecule suitable for the initiation of homologous recombination. The AddB subunit has 5' -&gt; 3' nuclease activity but not helicase activity. The chain is ATP-dependent helicase/deoxyribonuclease subunit B from Bacillus cereus (strain AH187).